The sequence spans 337 residues: Probable dual-specificity RNA methyltransferase RlmN (337 aa).

Catalysis depends on Glu-88, which acts as the Proton acceptor. Residues 94 to 322 (SSDRLTVCVS…ASIRRSRGLD (229 aa)) enclose the Radical SAM core domain. Cysteines 101 and 327 form a disulfide. [4Fe-4S] cluster is bound by residues Cys-108, Cys-112, and Cys-115. Residues 155 to 156 (GE), Ser-185, 208 to 210 (SLH), and Asn-284 each bind S-adenosyl-L-methionine. The active-site S-methylcysteine intermediate is the Cys-327.

The protein belongs to the radical SAM superfamily. RlmN family. [4Fe-4S] cluster serves as cofactor.

The protein resides in the cytoplasm. It catalyses the reaction adenosine(2503) in 23S rRNA + 2 reduced [2Fe-2S]-[ferredoxin] + 2 S-adenosyl-L-methionine = 2-methyladenosine(2503) in 23S rRNA + 5'-deoxyadenosine + L-methionine + 2 oxidized [2Fe-2S]-[ferredoxin] + S-adenosyl-L-homocysteine. The catalysed reaction is adenosine(37) in tRNA + 2 reduced [2Fe-2S]-[ferredoxin] + 2 S-adenosyl-L-methionine = 2-methyladenosine(37) in tRNA + 5'-deoxyadenosine + L-methionine + 2 oxidized [2Fe-2S]-[ferredoxin] + S-adenosyl-L-homocysteine. Its function is as follows. Specifically methylates position 2 of adenine 2503 in 23S rRNA and position 2 of adenine 37 in tRNAs. The polypeptide is Probable dual-specificity RNA methyltransferase RlmN (Thermosynechococcus vestitus (strain NIES-2133 / IAM M-273 / BP-1)).